We begin with the raw amino-acid sequence, 82 residues long: Musculoskeletal embryonic nuclear protein 1 (82 aa).

Disordered regions lie at residues M1–N33 and Q49–G82. S2 is modified (phosphoserine). Positions P10–V18 match the Nuclear localization signal motif.

It belongs to the MUSTN1 family. Expression in skeletal muscle is reduced during limb unloading but increases during the active recovery phase that follows.

The protein localises to the nucleus. It is found in the cytoplasm. The protein resides in the secreted. It localises to the extracellular space. Required for chondrocyte development and proliferation. Plays a role in myoblast differentiation and fusion. Modulates skeletal muscle extracellular matrix composition. Plays a role in skeletal muscle function. Plays a role in glucose homeostasis. This chain is Musculoskeletal embryonic nuclear protein 1 (MUSTN1), found in Homo sapiens (Human).